The sequence spans 160 residues: SsrA-binding protein (160 aa).

The protein belongs to the SmpB family.

The protein resides in the cytoplasm. Functionally, required for rescue of stalled ribosomes mediated by trans-translation. Binds to transfer-messenger RNA (tmRNA), required for stable association of tmRNA with ribosomes. tmRNA and SmpB together mimic tRNA shape, replacing the anticodon stem-loop with SmpB. tmRNA is encoded by the ssrA gene; the 2 termini fold to resemble tRNA(Ala) and it encodes a 'tag peptide', a short internal open reading frame. During trans-translation Ala-aminoacylated tmRNA acts like a tRNA, entering the A-site of stalled ribosomes, displacing the stalled mRNA. The ribosome then switches to translate the ORF on the tmRNA; the nascent peptide is terminated with the 'tag peptide' encoded by the tmRNA and targeted for degradation. The ribosome is freed to recommence translation, which seems to be the essential function of trans-translation. This is SsrA-binding protein from Photorhabdus laumondii subsp. laumondii (strain DSM 15139 / CIP 105565 / TT01) (Photorhabdus luminescens subsp. laumondii).